A 325-amino-acid polypeptide reads, in one-letter code: ATP phosphoribosyltransferase (325 aa).

This sequence belongs to the ATP phosphoribosyltransferase family. Long subfamily. Mg(2+) serves as cofactor.

It is found in the cytoplasm. It catalyses the reaction 1-(5-phospho-beta-D-ribosyl)-ATP + diphosphate = 5-phospho-alpha-D-ribose 1-diphosphate + ATP. Its pathway is amino-acid biosynthesis; L-histidine biosynthesis; L-histidine from 5-phospho-alpha-D-ribose 1-diphosphate: step 1/9. Feedback inhibited by histidine. Functionally, catalyzes the condensation of ATP and 5-phosphoribose 1-diphosphate to form N'-(5'-phosphoribosyl)-ATP (PR-ATP). Has a crucial role in the pathway because the rate of histidine biosynthesis seems to be controlled primarily by regulation of HisG enzymatic activity. The chain is ATP phosphoribosyltransferase from Bradyrhizobium sp. (strain ORS 278).